The chain runs to 421 residues: Uracil permease (421 aa).

The next 12 helical transmembrane spans lie at 18–38, 41–61, 65–85, 89–109, 115–135, 160–180, 186–206, 232–252, 304–324, 329–349, 371–391, and 393–413; these read IPLS…VPML, INPA…IFLC, IPAY…VIST, EAAL…GLLV, GWIE…VIGL, PKVI…NVMF, IIPI…LGIV, IAII…HLIV, VYSI…SFVG, LIQT…FGVI, ILTA…WGNF, and MKGM…FNII.

This sequence belongs to the nucleobase:cation symporter-2 (NCS2) (TC 2.A.40) family.

The protein localises to the cell membrane. Its activity is regulated as follows. Inhibited by the proton gradient disruptor carbonyl cyanide m-chlorophenylhydrazone (CCCP), but not by the sodium gradient disruptor ouabain. Both xanthine and uric acid act as competitive inhibitors of uracil transport. Specific for the uptake of uracil. Transport is probably proton-dependent. This chain is Uracil permease, found in Paenibacillus larvae subsp. larvae (strain NRRL B-3650 / LMG 16245).